Reading from the N-terminus, the 81-residue chain is Protein Vpu (81 aa).

The Extracellular segment spans residues 1–7; it reads MQSLQVL. A helical transmembrane segment spans residues 8–28; it reads AIVALVVATIIAIVVWTIVFI. Over 29–81 the chain is Cytoplasmic; the sequence is EYRKILRQRKIDRLINRITERAEDSGNESDGDQEELSALVERGHLAPWDVDDL. The disordered stretch occupies residues 50 to 81; that stretch reads AEDSGNESDGDQEELSALVERGHLAPWDVDDL. 2 positions are modified to phosphoserine; by host CK2: Ser53 and Ser57. Over residues 53–63 the composition is skewed to acidic residues; the sequence is SGNESDGDQEE.

It belongs to the HIV-1 VPU protein family. Homopentamer. Interacts with host CD4 and BRTC; these interactions induce proteasomal degradation of CD4. Interacts with host BST2; this interaction leads to the degradation of host BST2. Interacts with host FBXW11. Interacts with host AP1M1; this interaction plays a role in the mistrafficking and subsequent degradation of host BST2. Interacts with host RANBP2; this interaction allows Vpu to down-regulate host BLM sumoylation. Post-translationally, phosphorylated by host CK2. This phosphorylation is necessary for interaction with human BTRC and degradation of CD4.

It is found in the host membrane. With respect to regulation, ion channel activity is inhibited by hexamethylene amiloride in vitro. In terms of biological role, enhances virion budding by targeting host CD4 and Tetherin/BST2 to proteasome degradation. Degradation of CD4 prevents any unwanted premature interactions between viral Env and its host receptor CD4 in the endoplasmic reticulum. Degradation of antiretroviral protein Tetherin/BST2 is important for virion budding, as BST2 tethers new viral particles to the host cell membrane. Mechanistically, Vpu bridges either CD4 or BST2 to BTRC, a substrate recognition subunit of the Skp1/Cullin/F-box protein E3 ubiquitin ligase, induces their ubiquitination and subsequent proteasomal degradation. The alteration of the E3 ligase specificity by Vpu seems to promote the degradation of host IKBKB, leading to NF-kappa-B down-regulation and subsequent apoptosis. Acts as a viroporin that forms an oligomeric ion channel in membranes. Modulates the host DNA repair mechanisms to promote degradation of nuclear viral cDNA in cells that are already productively infected in order to suppress immune sensing and proviral hyper-integration (superinfection). Manipulates PML-NBs and modulates SUMOylation of host BLM protein thereby enhancing its DNA-end processing activity toward viral unintegrated linear DNA. Also inhibits RAD52-mediated homologous repair of viral cDNA, preventing the generation of dead-end circular forms of single copies of the long terminal repeat and permitting sustained nucleolytic attack. In Human immunodeficiency virus type 1 group M subtype B (isolate YU-2) (HIV-1), this protein is Protein Vpu.